Reading from the N-terminus, the 144-residue chain is Fluoride-specific ion channel FluC (144 aa).

The next 4 helical transmembrane spans lie at Leu7–Ala27, Phe33–Phe53, Leu71–Thr91, and Val105–Ala125. Na(+) is bound by residues Gly79 and Thr82.

It belongs to the fluoride channel Fluc/FEX (TC 1.A.43) family.

The protein localises to the cell inner membrane. The enzyme catalyses fluoride(in) = fluoride(out). Na(+) is not transported, but it plays an essential structural role and its presence is essential for fluoride channel function. In terms of biological role, fluoride-specific ion channel. Important for reducing fluoride concentration in the cell, thus reducing its toxicity. This chain is Fluoride-specific ion channel FluC, found in Gluconobacter oxydans (strain 621H) (Gluconobacter suboxydans).